Here is a 925-residue protein sequence, read N- to C-terminus: MLSIQQRYNICLMAERHPKWTQLELAKWAYETFQLPKIPSQGTISRLLARKSTYMNCKEHEKDANRLRKPNNLLVRKILQEWISQSLWNGIPITSPIIQDTAQAVWHRIPAEHREGNGSFSYKWISNFLSKMDVNISVLDEELPKTPKVWTFEERDVLKAYFSKIPPKDLFTLDEAFLSYNLPLDYAQYEASSIQRRIEVATVMLCSNLDGSEKLKPVVVGKYDSYKSFRNYFPNEPNDPVSQSMLGTKMAKKFDISYHSNRKAWLTSNLFHNWLVRWDKRLVAVNRKIWIVLDDSCCHRIINLRLQNIKLVYTSSNSKFLPFNWGVWDEFKTRYRIQQYQALIDLQNRISKNIQNKNKSERNECIPNGKKCLISFEQSQLTMSNAFKFIKKAWDDIPVDAIKANWKSSGLLPPEMIHLNENVSMAFKKNEVLESVLNRLCDEYYCVKKWEYEMLLDLNIENKNTNFLSTEELVESAIVEPCEPDFDTAPKGNEVHDDNFDVSVFANEDDNNQNHLSMSQASHNPDYNSNHSNNAIENTNNRGSNNNNNNNGSSNNINDNDSSVKYLQQNTVDNSTKTGNPGQPNISSMESQRNSSTTDLVVDGNYDVNFNGLLNDPYNTMKQPGPLDYNVSTLIDKPNLFLSPDLDLSTVGVDMQLPSSEYFSEVFSSAIRNNEKAASDQNKSTDELPSSTAMANSNSITTALLESRNQAQPFDVPHMNGLLSDTSKSGHSVNSSNAISQNSLNNFQHNSASVAEASSPSITPSPVAINSTGAPARSIISAPIDSNSSASSPSALEHLEGAVSGMSPSSTTILSNLQTNINIAKSLSTIMKHAESNEISLTKETINELNFNYLTLLKRIKKTRKQLNSESIKINSKNAQDHLETLLSGAAAAAATSANNLDLPTGGSNLPDSNNLHLPGNTGFF.

In terms of domain architecture, HTH CENPB-type spans 63 to 138 (DANRLRKPNN…LSKMDVNISV (76 aa)). Disordered stretches follow at residues 510–596 (DNNQ…RNSS), 674–693 (NEKAASDQNKSTDELPSSTA), and 904–925 (PTGGSNLPDSNNLHLPGNTGFF). Residues 513 to 537 (QNHLSMSQASHNPDYNSNHSNNAIE) show a composition bias toward polar residues. A compositionally biased stretch (low complexity) spans 538 to 563 (NTNNRGSNNNNNNNGSSNNINDNDSS). A compositionally biased stretch (polar residues) spans 565-596 (KYLQQNTVDNSTKTGNPGQPNISSMESQRNSS). Residues 674 to 686 (NEKAASDQNKSTD) are compositionally biased toward basic and acidic residues. Residues 904-916 (PTGGSNLPDSNNL) are compositionally biased toward polar residues.

Its function is as follows. Essential for the synthesis of pyruvate decarboxylase. May be important for a high basal level of PDC gene expression or play a positive role in the autoregulation control of PDC1 and PDC5. The chain is Protein PDC2 (PDC2) from Saccharomyces cerevisiae (strain ATCC 204508 / S288c) (Baker's yeast).